A 258-amino-acid polypeptide reads, in one-letter code: Trypsin (258 aa).

The first 16 residues, 1–16 (MIRFTLALAVIGVTFA), serve as a signal peptide directing secretion. A propeptide spans 17 to 29 (ASTPQIETNPNLE) (activation peptide). The Peptidase S1 domain occupies 30–257 (IIGGHDANII…FRDWINEETE (228 aa)). Cysteine 55 and cysteine 71 are joined by a disulfide. Catalysis depends on histidine 70, which acts as the Charge relay system. A glycan (N-linked (GlcNAc...) asparagine) is linked at asparagine 110. Aspartate 117 serves as the catalytic Charge relay system. Residues asparagine 130 and asparagine 188 are each glycosylated (N-linked (GlcNAc...) asparagine). Disulfide bonds link cysteine 182–cysteine 197 and cysteine 209–cysteine 233. Serine 213 functions as the Charge relay system in the catalytic mechanism.

It belongs to the peptidase S1 family. Expressed in larval carcasses and gut, and adult gut.

It is found in the secreted. The catalysed reaction is Preferential cleavage: Arg-|-Xaa, Lys-|-Xaa.. This is Trypsin from Phaedon cochleariae (Mustard beetle).